The primary structure comprises 637 residues: 1-deoxy-D-xylulose-5-phosphate synthase (637 aa).

Residues H73 and 113–115 each bind thiamine diphosphate; that span reads SHA. A Mg(2+)-binding site is contributed by D144. Thiamine diphosphate contacts are provided by residues 145-146, N174, Y285, and E366; that span reads GA. N174 contacts Mg(2+).

It belongs to the transketolase family. DXPS subfamily. Homodimer. It depends on Mg(2+) as a cofactor. Requires thiamine diphosphate as cofactor.

The enzyme catalyses D-glyceraldehyde 3-phosphate + pyruvate + H(+) = 1-deoxy-D-xylulose 5-phosphate + CO2. Its pathway is metabolic intermediate biosynthesis; 1-deoxy-D-xylulose 5-phosphate biosynthesis; 1-deoxy-D-xylulose 5-phosphate from D-glyceraldehyde 3-phosphate and pyruvate: step 1/1. Catalyzes the acyloin condensation reaction between C atoms 2 and 3 of pyruvate and glyceraldehyde 3-phosphate to yield 1-deoxy-D-xylulose-5-phosphate (DXP). The protein is 1-deoxy-D-xylulose-5-phosphate synthase of Streptomyces griseus subsp. griseus (strain JCM 4626 / CBS 651.72 / NBRC 13350 / KCC S-0626 / ISP 5235).